A 287-amino-acid chain; its full sequence is MKKAQTWIITCFCLQLLLLNPLVKTQSSCGNPVTDDVNDIAKLVGNLPNDYLITLKYVPKMDSLPNHCWLHLMVPEFSRSLHNLLQKFVDISDMSDVLSNYSIINNLTRIINDLMACLAFDKNKDFIKENGHLYEEDRFIPENFFRLFNRTIEVYKEFADSLDKNDCIMPSTVETPENDSRVAVTKTISFPPVAASSLRNDSIGSNTSSNSNKEALGFISSSSLQGISIALTSLLSLLIGFILGVIYWKKTHPKSRPESNETTQCHGCQEENEISMLQQKEKEHLQV.

The N-terminal stretch at 1 to 25 is a signal peptide; sequence MKKAQTWIITCFCLQLLLLNPLVKT. The Extracellular segment spans residues 26-225; it reads QSSCGNPVTD…LGFISSSSLQ (200 aa). 2 disulfides stabilise this stretch: Cys29/Cys117 and Cys68/Cys167. Asn100, Asn106, Asn149, Asn178, Asn200, and Asn206 each carry an N-linked (GlcNAc...) asparagine glycan. A helical membrane pass occupies residues 226–246; sequence GISIALTSLLSLLIGFILGVI. Topologically, residues 247–287 are cytoplasmic; that stretch reads YWKKTHPKSRPESNETTQCHGCQEENEISMLQQKEKEHLQV.

Belongs to the SCF family. As to quaternary structure, homodimer, non-covalently linked. Post-translationally, a soluble form is produced by proteolytic processing of isoform 1 in the extracellular domain.

The protein localises to the cell membrane. Its subcellular location is the secreted. It is found in the cytoplasm. It localises to the cytoskeleton. The protein resides in the cell projection. The protein localises to the lamellipodium. Its subcellular location is the filopodium. Ligand for the receptor-type protein-tyrosine kinase KIT. Plays an essential role in the regulation of cell survival and proliferation, hematopoiesis, stem cell maintenance, gametogenesis, mast cell development, migration and function, and in melanogenesis. KITLG/SCF binding can activate several signaling pathways. Acts synergistically with other cytokines, probably interleukins. The polypeptide is Kit ligand (KITLG) (Coturnix japonica (Japanese quail)).